Reading from the N-terminus, the 266-residue chain is Large ribosomal subunit protein eL8 (266 aa).

Glycyl lysine isopeptide (Lys-Gly) (interchain with G-Cter in SUMO2) cross-links involve residues lysine 11, lysine 20, and lysine 21. Lysine 34 is modified (N6-acetyllysine). A Glycyl lysine isopeptide (Lys-Gly) (interchain with G-Cter in SUMO2) cross-link involves residue lysine 48. N6-acetyllysine; alternate is present on lysine 97. Residue lysine 97 forms a Glycyl lysine isopeptide (Lys-Gly) (interchain with G-Cter in SUMO2); alternate linkage. A Glycyl lysine isopeptide (Lys-Gly) (interchain with G-Cter in SUMO2) cross-link involves residue lysine 125. Lysine 217 is modified (N6-acetyllysine). Lysine 245 is covalently cross-linked (Glycyl lysine isopeptide (Lys-Gly) (interchain with G-Cter in SUMO2)).

Belongs to the eukaryotic ribosomal protein eL8 family. Component of the large ribosomal subunit. Interacts with CRY1. Interacts with DICER1, AGO2, TARBP2, MOV10 and EIF6; they form a large RNA-induced silencing complex (RISC).

The protein resides in the cytoplasm. Functionally, component of the large ribosomal subunit. The ribosome is a large ribonucleoprotein complex responsible for the synthesis of proteins in the cell. In Mus musculus (Mouse), this protein is Large ribosomal subunit protein eL8 (Rpl7a).